Here is a 561-residue protein sequence, read N- to C-terminus: Arginine--tRNA ligase (561 aa).

Residues 135 to 145 carry the 'HIGH' region motif; sequence ANPTGLLHMGN.

Belongs to the class-I aminoacyl-tRNA synthetase family. Monomer.

It localises to the cytoplasm. The enzyme catalyses tRNA(Arg) + L-arginine + ATP = L-arginyl-tRNA(Arg) + AMP + diphosphate. The protein is Arginine--tRNA ligase of Desulfitobacterium hafniense (strain DSM 10664 / DCB-2).